A 465-amino-acid polypeptide reads, in one-letter code: Sushi repeat-containing protein SRPX2 (465 aa).

An N-terminal signal peptide occupies residues 1 to 23 (MAIQLTRRGALSLLLFLTPAVMP). Sushi domains are found at residues 69–119 (ATCY…YCRQ), 120–178 (MRCH…VCVD), and 262–321 (RRCP…VCVP). 4 disulfide bridges follow: Cys71-Cys105, Cys91-Cys117, Cys122-Cys163, and Cys149-Cys176. Residues 177–261 (VDIDPPKIRC…SCKFIVKVQV (85 aa)) enclose the HYR domain. Cystine bridges form between Cys264-Cys306 and Cys292-Cys319.

As to quaternary structure, forms homooligomers. Interacts with PLAUR (via the UPAR/Ly6 domains), ADAMTS4 and CTSB. Interacts with HGF; the interaction increases the mitogenic activity of HGF. Post-translationally, contains chondroitin sulfate chains.

Its subcellular location is the secreted. The protein resides in the cytoplasm. It localises to the cell surface. The protein localises to the synapse. Its function is as follows. Acts as a ligand for the urokinase plasminogen activator surface receptor. Plays a role in angiogenesis by inducing endothelial cell migration and the formation of vascular network (cords). Involved in cellular migration and adhesion. Increases the phosphorylation levels of FAK. Interacts with and increases the mitogenic activity of HGF. Promotes synapse formation. The polypeptide is Sushi repeat-containing protein SRPX2 (SRPX2) (Bos taurus (Bovine)).